Reading from the N-terminus, the 51-residue chain is uncharacterized protein (51 aa).

This is an uncharacterized protein from Rickettsia conorii (strain ATCC VR-613 / Malish 7).